The chain runs to 801 residues: MDEDEFELQPQEPNSFFDGIGADATHMDGDQIVVEIQEAVFVSNIVDSDITVHNFVPDDPDSVVIQDVVEDVVIEEDVQCSDILEEADVSENVIIPEQVLDSDVTEEVSLPHCTVPDDVLASDITSTSMSMPEHVLTSESMHVCDIGHVEHMVHDSVVEAEIITDPLTSDIVSEEVLVADCAPEAVIDASGISVDQQDNDKASCEDYLMISLDDAGKIEHDGSTGVTIDAESEMDPCKVDSTCPEVIKVYIFKADPGEDDLGGTVDIVESEPENDHGVELLDQNSSIRVPREKMVYMTVNDSQQEDEDLNVAEIADEVYMEVIVGEEDAAVAAAAAAVHEQQIDEDEMKTFVPIAWAAAYGNNSDGIENRNGTASALLHIDESAGLGRLAKQKPKKKRRPDSRQYQTAIIIGPDGHPLTVYPCMICGKKFKSRGFLKRHMKNHPEHLAKKKYHCTDCDYTTNKKISLHNHLESHKLTSKAEKAIECDECGKHFSHAGALFTHKMVHKEKGANKMHKCKFCEYETAEQGLLNRHLLAVHSKNFPHICVECGKGFRHPSELRKHMRIHTGEKPYQCQYCEYRSADSSNLKTHIKTKHSKEMPFKCDICLLTFSDTKEVQQHTLVHQESKTHQCLHCDHKSSNSSDLKRHVISVHTKDYPHKCEMCEKGFHRPSELKKHVAVHKGKKMHQCRHCDFKIADPFVLSRHILSVHTKDLPFRCKRCRKGFRQQNELKKHMKTHSGRKVYQCEYCEYSTTDASGFKRHVISIHTKDYPHRCEYCKKGFRRPSEKNQHIMRHHKEVGLP.

Residue S270 is modified to Phosphoserine. The segment at 421 to 443 adopts a C2H2-type 1 zinc-finger fold; it reads YPCMICGKKFKSRGFLKRHMKNH. A C2H2-type 2; atypical zinc finger spans residues 452 to 474; the sequence is YHCTDCDYTTNKKISLHNHLESH. 11 consecutive C2H2-type zinc fingers follow at residues 484–506, 515–538, 544–566, 572–595, 601–623, 629–652, 658–680, 686–709, 715–737, 743–766, and 772–795; these read IECD…KMVH, HKCK…LAVH, HICV…MRIH, YQCQ…KTKH, FKCD…TLVH, HQCL…ISVH, HKCE…VAVH, HQCR…LSVH, FRCK…MKTH, YQCE…ISIH, and HRCE…MRHH.

Belongs to the krueppel C2H2-type zinc-finger protein family. ZFX/ZFY subfamily.

Its subcellular location is the nucleus. Its function is as follows. Probable transcriptional activator. Binds to the consensus sequence 5'-AGGCCY-3'. In Homo sapiens (Human), this protein is Zinc finger Y-chromosomal protein (ZFY).